We begin with the raw amino-acid sequence, 670 residues long: DNA ligase (670 aa).

Residues Asp-34–Asp-38, Ser-84–Leu-85, Glu-116–Val-119, Arg-139, Glu-174, Tyr-226, Lys-291, and Lys-315 contribute to the NAD(+) site. Residue Lys-118 is the N6-AMP-lysine intermediate of the active site. Zn(2+) is bound by residues Cys-409, Cys-412, Cys-425, and Cys-430. Positions Glu-586 to Ala-670 constitute a BRCT domain.

This sequence belongs to the NAD-dependent DNA ligase family. LigA subfamily. Mg(2+) serves as cofactor.

The enzyme catalyses NAD(+) + (deoxyribonucleotide)n-3'-hydroxyl + 5'-phospho-(deoxyribonucleotide)m = (deoxyribonucleotide)n+m + AMP + beta-nicotinamide D-nucleotide.. Functionally, DNA ligase that catalyzes the formation of phosphodiester linkages between 5'-phosphoryl and 3'-hydroxyl groups in double-stranded DNA using NAD as a coenzyme and as the energy source for the reaction. It is essential for DNA replication and repair of damaged DNA. The chain is DNA ligase from Thermus filiformis.